The following is a 295-amino-acid chain: Probable deoxyhypusine synthase (295 aa).

Lys267 (nucleophile) is an active-site residue.

It belongs to the deoxyhypusine synthase family. NAD(+) serves as cofactor.

It catalyses the reaction [eIF5A protein]-L-lysine + spermidine = [eIF5A protein]-deoxyhypusine + propane-1,3-diamine. Its pathway is protein modification; eIF5A hypusination. In terms of biological role, catalyzes the NAD-dependent oxidative cleavage of spermidine and the subsequent transfer of the butylamine moiety of spermidine to the epsilon-amino group of a specific lysine residue of the eIF-5A precursor protein to form the intermediate deoxyhypusine residue. The polypeptide is Probable deoxyhypusine synthase (Pyrobaculum calidifontis (strain DSM 21063 / JCM 11548 / VA1)).